The following is a 477-amino-acid chain: PTS system glucose-specific EIICB component (477 aa).

The 388-residue stretch at Met1 to Asn388 folds into the PTS EIIC type-1 domain. 10 consecutive transmembrane segments (helical) span residues Ser15 to Ala35, Thr51 to Phe71, Gly76 to Val96, His112 to Phe132, Phe152 to Trp172, Pro191 to His211, Leu250 to His270, Ile280 to Ile300, Phe304 to Pro324, and Phe357 to Ile377. The 79-residue stretch at Asn399–Ile477 folds into the PTS EIIB type-1 domain. Residue Cys421 is the Phosphocysteine intermediate; for EIIB activity of the active site. The residue at position 421 (Cys421) is a Phosphocysteine.

It localises to the cell inner membrane. The catalysed reaction is N(pros)-phospho-L-histidyl-[protein] + D-glucose(out) = D-glucose 6-phosphate(in) + L-histidyl-[protein]. The phosphoenolpyruvate-dependent sugar phosphotransferase system (sugar PTS), a major carbohydrate active transport system, catalyzes the phosphorylation of incoming sugar substrates concomitantly with their translocation across the cell membrane. The enzyme II complex composed of PtsG and Crr is involved in glucose transport. The chain is PTS system glucose-specific EIICB component (ptsG) from Buchnera aphidicola subsp. Acyrthosiphon pisum (strain APS) (Acyrthosiphon pisum symbiotic bacterium).